We begin with the raw amino-acid sequence, 266 residues long: Tryptophan synthase alpha chain (266 aa).

Active-site proton acceptor residues include Glu49 and Asp60.

It belongs to the TrpA family. As to quaternary structure, tetramer of two alpha and two beta chains.

The enzyme catalyses (1S,2R)-1-C-(indol-3-yl)glycerol 3-phosphate + L-serine = D-glyceraldehyde 3-phosphate + L-tryptophan + H2O. The protein operates within amino-acid biosynthesis; L-tryptophan biosynthesis; L-tryptophan from chorismate: step 5/5. Its function is as follows. The alpha subunit is responsible for the aldol cleavage of indoleglycerol phosphate to indole and glyceraldehyde 3-phosphate. This is Tryptophan synthase alpha chain from Shewanella amazonensis (strain ATCC BAA-1098 / SB2B).